Consider the following 64-residue polypeptide: Large ribosomal subunit protein bL35 (64 aa).

Over residues 1–14 the composition is skewed to basic residues; sequence MKQKTHKGTAKRVK. A disordered region spans residues 1–50; that stretch reads MKQKTHKGTAKRVKITGSGKLRREQANRRHLLEGKPSKRTRRLKGTEDVA. Residues 21-36 show a composition bias toward basic and acidic residues; that stretch reads LRREQANRRHLLEGKP.

Belongs to the bacterial ribosomal protein bL35 family.

The protein is Large ribosomal subunit protein bL35 of Corynebacterium diphtheriae (strain ATCC 700971 / NCTC 13129 / Biotype gravis).